The sequence spans 61 residues: MDTKLLDILACPICKGPLKLSADKTELISKGAGLAYPIRDGIPVMLESEARTLTTDERLDK.

This sequence belongs to the UPF0434 family.

This Pseudomonas fluorescens (strain SBW25) protein is UPF0434 protein PFLU_3771.